We begin with the raw amino-acid sequence, 809 residues long: PiggyBac transposable element-derived protein 1 (809 aa).

An SCAN box domain is found at arginine 44 to serine 126. The segment at cysteine 170–proline 199 is disordered. Lysine 218 is covalently cross-linked (Glycyl lysine isopeptide (Lys-Gly) (interchain with G-Cter in SUMO2)). The disordered stretch occupies residues lysine 271–proline 297. Serine 360 is subject to Phosphoserine.

In Homo sapiens (Human), this protein is PiggyBac transposable element-derived protein 1 (PGBD1).